Consider the following 81-residue polypeptide: Weak neurotoxin OH-72 (81 aa).

Positions 1 to 16 (LTLVVVTIVCLDLGYT) are cleaved as a signal peptide. 5 disulfides stabilise this stretch: Cys-19–Cys-40, Cys-22–Cys-27, Cys-33–Cys-58, Cys-62–Cys-73, and Cys-74–Cys-79.

Belongs to the three-finger toxin family. Ancestral subfamily. Orphan group II sub-subfamily. In terms of tissue distribution, expressed by the venom gland.

The protein localises to the secreted. In terms of biological role, binds with low affinity to muscular (alpha-1-beta-1-delta-epsilon/CHRNA1-CHRNB1-CHRND-CHRNE) and very low affinity to neuronal (alpha-7/CHRNA7) nicotinic acetylcholine receptor (nAChR). In Ophiophagus hannah (King cobra), this protein is Weak neurotoxin OH-72.